The following is a 214-amino-acid chain: Octanoyltransferase (214 aa).

In terms of domain architecture, BPL/LPL catalytic spans 31 to 206 (KDDADEIWLL…QLAEQLGYNY (176 aa)). Substrate contacts are provided by residues 70–77 (RGGQVTYH), 137–139 (SLG), and 150–152 (GLA). Cysteine 168 serves as the catalytic Acyl-thioester intermediate.

Belongs to the LipB family.

The protein resides in the cytoplasm. It carries out the reaction octanoyl-[ACP] + L-lysyl-[protein] = N(6)-octanoyl-L-lysyl-[protein] + holo-[ACP] + H(+). It functions in the pathway protein modification; protein lipoylation via endogenous pathway; protein N(6)-(lipoyl)lysine from octanoyl-[acyl-carrier-protein]: step 1/2. Its function is as follows. Catalyzes the transfer of endogenously produced octanoic acid from octanoyl-acyl-carrier-protein onto the lipoyl domains of lipoate-dependent enzymes. Lipoyl-ACP can also act as a substrate although octanoyl-ACP is likely to be the physiological substrate. This Marinomonas sp. (strain MWYL1) protein is Octanoyltransferase.